Consider the following 248-residue polypeptide: Ubiquinone biosynthesis O-methyltransferase (248 aa).

S-adenosyl-L-methionine contacts are provided by Arg41, Gly72, Asp93, and Met136.

The protein belongs to the methyltransferase superfamily. UbiG/COQ3 family.

The catalysed reaction is a 3-demethylubiquinol + S-adenosyl-L-methionine = a ubiquinol + S-adenosyl-L-homocysteine + H(+). The enzyme catalyses a 3-(all-trans-polyprenyl)benzene-1,2-diol + S-adenosyl-L-methionine = a 2-methoxy-6-(all-trans-polyprenyl)phenol + S-adenosyl-L-homocysteine + H(+). It participates in cofactor biosynthesis; ubiquinone biosynthesis. Functionally, O-methyltransferase that catalyzes the 2 O-methylation steps in the ubiquinone biosynthetic pathway. This is Ubiquinone biosynthesis O-methyltransferase from Brucella anthropi (strain ATCC 49188 / DSM 6882 / CCUG 24695 / JCM 21032 / LMG 3331 / NBRC 15819 / NCTC 12168 / Alc 37) (Ochrobactrum anthropi).